We begin with the raw amino-acid sequence, 314 residues long: Pantothenate kinase (314 aa).

93–100 (GSVAVGKS) lines the ATP pocket.

The protein belongs to the prokaryotic pantothenate kinase family.

Its subcellular location is the cytoplasm. It catalyses the reaction (R)-pantothenate + ATP = (R)-4'-phosphopantothenate + ADP + H(+). It participates in cofactor biosynthesis; coenzyme A biosynthesis; CoA from (R)-pantothenate: step 1/5. In Shewanella denitrificans (strain OS217 / ATCC BAA-1090 / DSM 15013), this protein is Pantothenate kinase.